The following is a 540-amino-acid chain: Probable protein kinase UbiB (540 aa).

A helical membrane pass occupies residues 24-44; it reads LLFEQPLLPWWLASLRLLMPW. One can recognise a Protein kinase domain in the interval 126–494; it reads RFDVEPLASA…RRRQGDRWAL (369 aa). ATP is bound by residues 132–140 and Lys154; that span reads LASASVAQV. Asp289 acts as the Proton acceptor in catalysis. 2 helical membrane passes run 496 to 516 and 518 to 538; these read LLGA…AEAA and LAAP…YLIV.

Belongs to the ABC1 family. UbiB subfamily.

It localises to the cell inner membrane. It participates in cofactor biosynthesis; ubiquinone biosynthesis [regulation]. Functionally, is probably a protein kinase regulator of UbiI activity which is involved in aerobic coenzyme Q (ubiquinone) biosynthesis. This is Probable protein kinase UbiB from Pseudomonas putida (strain GB-1).